We begin with the raw amino-acid sequence, 623 residues long: Chaperone protein DnaK (623 aa).

Phosphothreonine; by autocatalysis is present on threonine 197. Over residues 595-615 the composition is skewed to basic and acidic residues; the sequence is AENMYKKDEPNTANDKKKKDD. The interval 595–623 is disordered; that stretch reads AENMYKKDEPNTANDKKKKDDDVIDAEVE.

This sequence belongs to the heat shock protein 70 family.

Acts as a chaperone. The chain is Chaperone protein DnaK from Campylobacter jejuni subsp. doylei (strain ATCC BAA-1458 / RM4099 / 269.97).